The sequence spans 258 residues: Sec-independent protein translocase protein TatC (258 aa).

The Cytoplasmic segment spans residues 2–23; that stretch reads SVEDTQPLITHLIELRKRLLNC. The chain crosses the membrane as a helical span at residues 24–44; that stretch reads IIAVIVIFLCLVYFANDIYHL. The Periplasmic portion of the chain corresponds to 45 to 75; sequence VSAPLIKQLPQGSTMIATDVASPFFTPIKLT. Residues 76-96 traverse the membrane as a helical segment; the sequence is FMVSLILSAPVILYQVWAFIA. The Cytoplasmic segment spans residues 97–115; that stretch reads PALYKHERRLVVPLLVSSS. Residues 116 to 136 form a helical membrane-spanning segment; it reads LLFYIGMAFAYFVVFPLAFGF. Topologically, residues 137 to 156 are periplasmic; sequence LANTAPEGVQVSTDIASYLS. The helical transmembrane segment at 157–177 threads the bilayer; that stretch reads FVMALFMAFGVSFEVPVAIVL. Over 178-192 the chain is Cytoplasmic; it reads LCWMGITSPEDLRKK. Residues 193 to 210 traverse the membrane as a helical segment; it reads RPYVLVGAFVVGMLLTPP. Position 211 (Asp211) is a topological domain, periplasmic. A helical transmembrane segment spans residues 212–232; that stretch reads VFSQTLLAIPMYCLFEIGVFF. The Cytoplasmic segment spans residues 233-258; that stretch reads SRFYVGKGRNREEENDAEAESEKTEE.

It belongs to the TatC family. As to quaternary structure, the Tat system comprises two distinct complexes: a TatABC complex, containing multiple copies of TatA, TatB and TatC subunits, and a separate TatA complex, containing only TatA subunits. Substrates initially bind to the TatABC complex, which probably triggers association of the separate TatA complex to form the active translocon. TatC can form a distinct, stable, multimeric complex independent of TatA and TatB. Each of TatA, TatB and TatC are able to interact in pairs without the third partner. Interacts with the signal sequence of DmsA and DmsD.

The protein localises to the cell inner membrane. In terms of biological role, part of the twin-arginine translocation (Tat) system that transports large folded proteins containing a characteristic twin-arginine motif in their signal peptide across membranes. Together with TatB, TatC is part of a receptor directly interacting with Tat signal peptides. This Escherichia coli (strain K12) protein is Sec-independent protein translocase protein TatC.